A 221-amino-acid polypeptide reads, in one-letter code: Probable glutathione S-transferase parC (221 aa).

A GST N-terminal domain is found at 4–83; the sequence is EEVILLDFWP…YIEEVWKDKA (80 aa). Residues S14, K41, I55, and 67-68 contribute to the glutathione site; that span reads ES. In terms of domain architecture, GST C-terminal spans 90–214; it reads DPYDRAQARF…PKVLEFVKVL (125 aa).

This sequence belongs to the GST superfamily. Phi family. In terms of tissue distribution, abundant in seedlings and roots. It is also found in the shoot tips, flowers and leaves.

The catalysed reaction is RX + glutathione = an S-substituted glutathione + a halide anion + H(+). Conjugation of reduced glutathione to a wide number of exogenous and endogenous hydrophobic electrophiles. This is Probable glutathione S-transferase parC (PARC) from Nicotiana tabacum (Common tobacco).